The primary structure comprises 466 residues: 55 kDa erythrocyte membrane protein (466 aa).

The residue at position 2 (threonine 2) is an N-acetylthreonine. Serine 19 carries the phosphoserine modification. A Phosphothreonine modification is found at threonine 49. Phosphoserine occurs at positions 57 and 110. The PDZ domain maps to 71–152; the sequence is LIQFEKVTEE…MISLKVIPNQ (82 aa). The region spanning 158 to 228 is the SH3 domain; it reads ALQMFMRAQF…PSPELQEWRV (71 aa). Phosphoserine is present on serine 243. An interaction with PALS1 region spans residues 268–466; that stretch reads VVSYEEVVRL…PQWVPVSWVY (199 aa). Positions 282–451 constitute a Guanylate kinase-like domain; it reads RKTLVLIGAS…TLKTLQETFD (170 aa).

Belongs to the MAGUK family. In terms of assembly, heterodimer with PALS1. Interacts with DLG5 and NF2. Interacts (via guanylate kinase-like domain) with WHRN (via third PDZ domain). Interacts with PALS1. Post-translationally, palmitoylated.

Its subcellular location is the cell membrane. It localises to the cell projection. The protein localises to the stereocilium. Its function is as follows. Essential regulator of neutrophil polarity. Regulates neutrophil polarization by regulating AKT1 phosphorylation through a mechanism that is independent of PIK3CG activity. This chain is 55 kDa erythrocyte membrane protein (MPP1), found in Bos taurus (Bovine).